A 274-amino-acid chain; its full sequence is Penicillin-insensitive murein endopeptidase (274 aa).

The signal sequence occupies residues 1 to 19 (MNKTAIALLALLASSVSLA). Intrachain disulfides connect C44–C265, C187–C235, and C216–C223. 6 residues coordinate Zn(2+): H110, H113, D120, D147, H150, and H211. The segment at 227–274 (PLPPPGDGCGAELQSWFEPPKPGTTKPEKKTPPPLPPSCQALLDEHVI) is disordered.

This sequence belongs to the peptidase M74 family. Dimer. Requires Zn(2+) as cofactor.

It is found in the periplasm. Murein endopeptidase that cleaves the D-alanyl-meso-2,6-diamino-pimelyl amide bond that connects peptidoglycan strands. Likely plays a role in the removal of murein from the sacculus. The sequence is that of Penicillin-insensitive murein endopeptidase from Shigella dysenteriae serotype 1 (strain Sd197).